A 377-amino-acid chain; its full sequence is UDP-N,N'-diacetylbacillosamine 2-epimerase (hydrolyzing) (377 aa).

Belongs to the UDP-N-acetylglucosamine 2-epimerase family.

The enzyme catalyses UDP-N,N'-diacetylbacillosamine + H2O = 2,4-diacetamido-2,4,6-trideoxy-alpha-D-mannopyranose + UDP + H(+). Involved in biosynthesis of legionaminic acid (5,7-diamino-3,5,7,9-tetradeoxy-D-glycero-D-galacto-non-2-ulosonic acid)(Leg), a sialic acid-like derivative that is incorporated into virulence-associated cell surface glycoconjugates such as lipopolysaccharide (LPS) which could be a key determinant in the ability of L.pneumophila to inhibit the fusion of phagosomes with lysosomes. LPS contains a majority alpha2,4-linked homomer of legionaminic acid. Catalyzes the conversion of UDP-N,N'-diacetylbacillosamine (Bac2Ac4Ac) into 2,4-diacetamido-2,4,6-trideoxymannose and UDP. This chain is UDP-N,N'-diacetylbacillosamine 2-epimerase (hydrolyzing), found in Legionella pneumophila subsp. pneumophila (strain Philadelphia 1 / ATCC 33152 / DSM 7513).